Reading from the N-terminus, the 88-residue chain is HssA/B-like protein 9 (88 aa).

The span at 1-14 shows a compositional bias: polar residues; that stretch reads MSILSALTSISNPM. The interval 1-26 is disordered; sequence MSILSALTSISNPMKSSKSSVANGGG.

It belongs to the hssA/B family.

The chain is HssA/B-like protein 9 (hssl9) from Dictyostelium discoideum (Social amoeba).